Consider the following 170-residue polypeptide: Adenine phosphoribosyltransferase (170 aa).

It belongs to the purine/pyrimidine phosphoribosyltransferase family. As to quaternary structure, homodimer.

The protein localises to the cytoplasm. It catalyses the reaction AMP + diphosphate = 5-phospho-alpha-D-ribose 1-diphosphate + adenine. Its pathway is purine metabolism; AMP biosynthesis via salvage pathway; AMP from adenine: step 1/1. Functionally, catalyzes a salvage reaction resulting in the formation of AMP, that is energically less costly than de novo synthesis. This is Adenine phosphoribosyltransferase from Cyanothece sp. (strain PCC 7425 / ATCC 29141).